The following is a 282-amino-acid chain: MGSHRDLPAGMVNHIFTNSGISSFTEFVGSYAPDLLPGRNETLAAPVGDRIPHATTIVAATCAGGVVMAGDRRATSGNIISQRDMEKVFRTDDYSCMGIAGTASTGIEMARLYRVELEHYEKMEGRTLSVAGKANRLATMIRGNLGMAMQGLVVVPLFAAYDPEIDGGRIFGYDVGGGPYEQQQYHSIGSGSIFARGSLKKLYRENASPEEVVLTLIHALYDAADDDSATGGPDVTRKIWPVVAQITADGFHRLSDEEVGGHVQTVLQERMSSPDGPVAPLR.

The propeptide at 1–54 (MGSHRDLPAGMVNHIFTNSGISSFTEFVGSYAPDLLPGRNETLAAPVGDRIPHA) is removed in mature form; by autocatalysis. Catalysis depends on Thr-55, which acts as the Nucleophile.

This sequence belongs to the peptidase T1B family. In terms of assembly, the 20S proteasome core is composed of 14 alpha and 14 beta subunits that assemble into four stacked heptameric rings, resulting in a barrel-shaped structure. The two inner rings, each composed of seven catalytic beta subunits, are sandwiched by two outer rings, each composed of seven alpha subunits. The catalytic chamber with the active sites is on the inside of the barrel. Has a gated structure, the ends of the cylinder being occluded by the N-termini of the alpha-subunits. Is capped by the proteasome-associated ATPase, ARC.

It is found in the cytoplasm. The catalysed reaction is Cleavage of peptide bonds with very broad specificity.. Its pathway is protein degradation; proteasomal Pup-dependent pathway. With respect to regulation, the formation of the proteasomal ATPase ARC-20S proteasome complex, likely via the docking of the C-termini of ARC into the intersubunit pockets in the alpha-rings, may trigger opening of the gate for substrate entry. Interconversion between the open-gate and close-gate conformations leads to a dynamic regulation of the 20S proteasome proteolysis activity. Its function is as follows. Component of the proteasome core, a large protease complex with broad specificity involved in protein degradation. This Streptosporangium roseum (strain ATCC 12428 / DSM 43021 / JCM 3005 / KCTC 9067 / NCIMB 10171 / NRRL 2505 / NI 9100) protein is Proteasome subunit beta.